A 166-amino-acid polypeptide reads, in one-letter code: Small ribosomal subunit protein uS5 (166 aa).

The 64-residue stretch at 11–74 (LQEKLIAVNR…EKARRNMMNV (64 aa)) folds into the S5 DRBM domain.

The protein belongs to the universal ribosomal protein uS5 family. As to quaternary structure, part of the 30S ribosomal subunit. Contacts proteins S4 and S8.

Functionally, with S4 and S12 plays an important role in translational accuracy. Its function is as follows. Located at the back of the 30S subunit body where it stabilizes the conformation of the head with respect to the body. The polypeptide is Small ribosomal subunit protein uS5 (Buchnera aphidicola subsp. Acyrthosiphon kondoi (Acyrthosiphon kondoi symbiotic bacterium)).